A 223-amino-acid polypeptide reads, in one-letter code: Cytidylate kinase (223 aa).

Gly-12–Thr-20 is a binding site for ATP.

This sequence belongs to the cytidylate kinase family. Type 1 subfamily.

The protein resides in the cytoplasm. It catalyses the reaction CMP + ATP = CDP + ADP. It carries out the reaction dCMP + ATP = dCDP + ADP. This Onion yellows phytoplasma (strain OY-M) protein is Cytidylate kinase.